A 151-amino-acid chain; its full sequence is Deoxyuridine 5'-triphosphate nucleotidohydrolase (151 aa).

Residues 71–73 (RSG), asparagine 84, and 88–90 (TID) each bind substrate.

This sequence belongs to the dUTPase family. Mg(2+) is required as a cofactor.

The catalysed reaction is dUTP + H2O = dUMP + diphosphate + H(+). Its pathway is pyrimidine metabolism; dUMP biosynthesis; dUMP from dCTP (dUTP route): step 2/2. This enzyme is involved in nucleotide metabolism: it produces dUMP, the immediate precursor of thymidine nucleotides and it decreases the intracellular concentration of dUTP so that uracil cannot be incorporated into DNA. This Gluconobacter oxydans (strain 621H) (Gluconobacter suboxydans) protein is Deoxyuridine 5'-triphosphate nucleotidohydrolase.